Here is a 139-residue protein sequence, read N- to C-terminus: Actin-depolymerizing factor 1 (139 aa).

The ADF-H domain occupies 5–139 (SSGLAVNDEC…SLDIVRSRTN (135 aa)).

Belongs to the actin-binding proteins ADF family. In terms of tissue distribution, expressed in pollen.

Functionally, actin-depolymerizing protein. Severs actin filaments (F-actin) and binds to actin monomers. This is Actin-depolymerizing factor 1 (ADF1) from Zea mays (Maize).